The primary structure comprises 377 residues: Actin-related protein 2/3 complex subunit 1 (377 aa).

WD repeat units lie at residues 9-48, 53-92, 98-139, 144-183, and 203-242; these read ILPK…WKHA, DHDK…TWKQ, RLNR…WVSK, PLRS…VDAK, and PSGG…QPPR. The disordered stretch occupies residues 293 to 313; that stretch reads GTSKTSFTHTGNTGEGREEEG. The stretch at 342–376 is one WD 6 repeat; the sequence is VHQNMIATLRPYAGTPGNITAFTSSGTDGRVVLWT.

It belongs to the WD repeat ARPC1 family. As to quaternary structure, component of the Arp2/3 complex composed of arp2, act2, arc1/p41-ARC, arc2/p34-ARC, arc3/p21-ARC, arc4/p20-ARC and arc5/p16-ARC.

The protein resides in the cytoplasm. It localises to the cytoskeleton. It is found in the actin patch. Its function is as follows. Functions as a component of the Arp2/3 complex which is involved in regulation of actin polymerization and together with an activating nucleation-promoting factor (NPF) mediates the formation of branched actin networks. The polypeptide is Actin-related protein 2/3 complex subunit 1 (arc1) (Schizosaccharomyces pombe (strain 972 / ATCC 24843) (Fission yeast)).